Here is a 72-residue protein sequence, read N- to C-terminus: Translation initiation factor IF-1 (72 aa).

In terms of domain architecture, S1-like spans 1-72 (MAKEELLEMR…TKGRITYRFK (72 aa)).

The protein belongs to the IF-1 family. Component of the 30S ribosomal translation pre-initiation complex which assembles on the 30S ribosome in the order IF-2 and IF-3, IF-1 and N-formylmethionyl-tRNA(fMet); mRNA recruitment can occur at any time during PIC assembly.

The protein localises to the cytoplasm. One of the essential components for the initiation of protein synthesis. Stabilizes the binding of IF-2 and IF-3 on the 30S subunit to which N-formylmethionyl-tRNA(fMet) subsequently binds. Helps modulate mRNA selection, yielding the 30S pre-initiation complex (PIC). Upon addition of the 50S ribosomal subunit IF-1, IF-2 and IF-3 are released leaving the mature 70S translation initiation complex. This chain is Translation initiation factor IF-1, found in Sphingopyxis alaskensis (strain DSM 13593 / LMG 18877 / RB2256) (Sphingomonas alaskensis).